The chain runs to 311 residues: uncharacterized protein (311 aa).

This is an uncharacterized protein from Sinorhizobium fredii (strain NBRC 101917 / NGR234).